A 137-amino-acid polypeptide reads, in one-letter code: Large ribosomal subunit protein uL16 (137 aa).

Belongs to the universal ribosomal protein uL16 family. Part of the 50S ribosomal subunit.

Binds 23S rRNA and is also seen to make contacts with the A and possibly P site tRNAs. The polypeptide is Large ribosomal subunit protein uL16 (Ruegeria pomeroyi (strain ATCC 700808 / DSM 15171 / DSS-3) (Silicibacter pomeroyi)).